The chain runs to 348 residues: tRNA N6-adenosine threonylcarbamoyltransferase (348 aa).

2 residues coordinate Fe cation: His-116 and His-120. Substrate is bound by residues 138–142, Asp-171, Gly-184, Asp-188, and Asn-277; that span reads QVSGG. Fe cation is bound at residue Asp-309.

It belongs to the KAE1 / TsaD family. Fe(2+) is required as a cofactor.

The protein localises to the cytoplasm. The catalysed reaction is L-threonylcarbamoyladenylate + adenosine(37) in tRNA = N(6)-L-threonylcarbamoyladenosine(37) in tRNA + AMP + H(+). In terms of biological role, required for the formation of a threonylcarbamoyl group on adenosine at position 37 (t(6)A37) in tRNAs that read codons beginning with adenine. Is involved in the transfer of the threonylcarbamoyl moiety of threonylcarbamoyl-AMP (TC-AMP) to the N6 group of A37, together with TsaE and TsaB. TsaD likely plays a direct catalytic role in this reaction. This chain is tRNA N6-adenosine threonylcarbamoyltransferase, found in Lactobacillus johnsonii (strain CNCM I-12250 / La1 / NCC 533).